The following is a 97-amino-acid chain: Small ribosomal subunit protein bS21 (97 aa).

The segment at 37–97 is disordered; the sequence is EKPSVRKARE…APASSPTTTA (61 aa). Over residues 76–97 the composition is skewed to low complexity; it reads RAVAPRRPAAAPAPASSPTTTA.

It belongs to the bacterial ribosomal protein bS21 family.

This is Small ribosomal subunit protein bS21 from Methylobacterium sp. (strain 4-46).